Here is a 189-residue protein sequence, read N- to C-terminus: MTEYKLVIVGGGGVGKSALTIQLIQNHFIDEYDPTIEDSYRKQVTIDEETCLLDILDTAGQEEYSAMRDQYMRTGQGFLCVYSITSRSSFDEIASFREQILRVKDKDKVPMIVVGNKCDLEGERQVTTGEGQDLARSFGCPFMETSAKSRVNVEESFYQLVREIRKDSRTDTKGPGGKGGKKTLKCLLL.

10–17 (GGGGVGKS) provides a ligand contact to GTP. Positions 32 to 40 (YDPTIEDSY) match the Effector region motif. GTP-binding positions include 57 to 61 (DTAGQ) and 116 to 119 (NKCD). The residue at position 186 (C186) is a Cysteine methyl ester. Residue C186 is the site of S-geranylgeranyl cysteine attachment. A propeptide spans 187–189 (LLL) (removed in mature form).

This sequence belongs to the small GTPase superfamily. Ras family.

It is found in the cell membrane. It carries out the reaction GTP + H2O = GDP + phosphate + H(+). Functionally, ras proteins bind GDP/GTP and possess intrinsic GTPase activity. The polypeptide is Ras-like protein 1 (RAS1) (Physarum polycephalum (Slime mold)).